A 268-amino-acid polypeptide reads, in one-letter code: Speedy protein E4A (268 aa).

Disordered regions lie at residues 1 to 26 (MGEG…LGFV) and 43 to 97 (LCSE…LDSE). Positions 43–52 (LCSEEQSPQP) are enriched in polar residues. The interval 134–265 (PEHHKVFTKL…DLWVWARDRT (132 aa)) is speedy/Ringo box; Required for CDK-binding.

This sequence belongs to the Speedy/Ringo family. In terms of assembly, interacts with CDK1. Does not interact with CDK2 in vivo. Testis-specific.

The protein resides in the nucleus. Functionally, promotes progression through the cell cycle via binding and activation of CDK1. The sequence is that of Speedy protein E4A from Mus musculus (Mouse).